Reading from the N-terminus, the 119-residue chain is MVKLTKAKTFQAYLDSCHRRYSCVHCRAHLANHDDLISKSFQGSQGRAYLFNSVVNVGCGPAEERLLLTGLHAVADIYCENCHTTLGWKYEQAFELSQKYKEGKYIIELSHMIKDNGWD.

The region spanning 19 to 116 (RRYSCVHCRA…IELSHMIKDN (98 aa)) is the Yippee domain. The Zn(2+) site is built by Cys-23, Cys-26, Cys-79, and Cys-82.

The protein belongs to the yippee family.

It is found in the nucleus. The protein resides in the nucleolus. In terms of biological role, may be involved in proliferation and apoptosis in myeloid precursor cells. This Oryzias latipes (Japanese rice fish) protein is Protein yippee-like 3 (ypel3).